Consider the following 142-residue polypeptide: MNTFSAKPAEVVHEWFVIDATDKVLGRVASEVALRLRGKHKAIYTPHVDTGDFIVVVNAEKLRVTGTKSIDKKYYRHSGYPGGIFETNFRDMQAKHPGRALQKAVKGMLPKGPLGYAMIKKLKVYAGDTHPHAAQQPKTLDI.

It belongs to the universal ribosomal protein uL13 family. In terms of assembly, part of the 50S ribosomal subunit.

This protein is one of the early assembly proteins of the 50S ribosomal subunit, although it is not seen to bind rRNA by itself. It is important during the early stages of 50S assembly. This Leptothrix cholodnii (strain ATCC 51168 / LMG 8142 / SP-6) (Leptothrix discophora (strain SP-6)) protein is Large ribosomal subunit protein uL13.